We begin with the raw amino-acid sequence, 336 residues long: Acetyl-coenzyme A carboxylase carboxyl transferase subunit alpha (336 aa).

Positions 48–308 (ALEAKVESLR…KSMLIEELQG (261 aa)) constitute a CoA carboxyltransferase C-terminal domain.

This sequence belongs to the AccA family. In terms of assembly, acetyl-CoA carboxylase is a heterohexamer composed of biotin carboxyl carrier protein (AccB), biotin carboxylase (AccC) and two subunits each of ACCase subunit alpha (AccA) and ACCase subunit beta (AccD).

It localises to the cytoplasm. It carries out the reaction N(6)-carboxybiotinyl-L-lysyl-[protein] + acetyl-CoA = N(6)-biotinyl-L-lysyl-[protein] + malonyl-CoA. The protein operates within lipid metabolism; malonyl-CoA biosynthesis; malonyl-CoA from acetyl-CoA: step 1/1. Its function is as follows. Component of the acetyl coenzyme A carboxylase (ACC) complex. First, biotin carboxylase catalyzes the carboxylation of biotin on its carrier protein (BCCP) and then the CO(2) group is transferred by the carboxyltransferase to acetyl-CoA to form malonyl-CoA. This chain is Acetyl-coenzyme A carboxylase carboxyl transferase subunit alpha, found in Chlorobaculum parvum (strain DSM 263 / NCIMB 8327) (Chlorobium vibrioforme subsp. thiosulfatophilum).